Here is a 605-residue protein sequence, read N- to C-terminus: Threonine--tRNA ligase (605 aa).

Residues 195–497 (DHRKVGKELG…LIEEYAGDFP (303 aa)) form a catalytic region. Positions 294, 345, and 474 each coordinate Zn(2+).

This sequence belongs to the class-II aminoacyl-tRNA synthetase family. In terms of assembly, homodimer. The cofactor is Zn(2+).

The protein resides in the cytoplasm. The catalysed reaction is tRNA(Thr) + L-threonine + ATP = L-threonyl-tRNA(Thr) + AMP + diphosphate + H(+). Functionally, catalyzes the attachment of threonine to tRNA(Thr) in a two-step reaction: L-threonine is first activated by ATP to form Thr-AMP and then transferred to the acceptor end of tRNA(Thr). Also edits incorrectly charged L-seryl-tRNA(Thr). The protein is Threonine--tRNA ligase of Thermosynechococcus vestitus (strain NIES-2133 / IAM M-273 / BP-1).